The primary structure comprises 2457 residues: Large tegument protein deneddylase (2457 aa).

The deubiquitination activity stretch occupies residues 1 to 234; the sequence is MALPASLAGF…SDLHGSKIIL (234 aa). The Peptidase C76 domain occupies 13–224; sequence EGTASTNQAD…IMSHYKVISF (212 aa). Residues C33, D163, and H165 contribute to the active site. Disordered regions lie at residues 281–350, 2064–2131, 2164–2360, and 2387–2407; these read EEWT…LPSV, ITEG…PIIP, GHSG…PQPQ, and GMSD…GVTH. The segment covering 293 to 302 has biased composition (basic and acidic residues); that stretch reads SGRTPPEKMT. Residues 314–334 show a composition bias toward acidic residues; that stretch reads TMDDDVIDLTGDDDMEDESEG. Basic and acidic residues predominate over residues 2080–2091; it reads TQDHMEEPDNKQ. Residues 2115–2131 show a composition bias toward pro residues; that stretch reads SPSPSPPVLTPIKPIIP. Residues 2173 to 2186 show a composition bias toward polar residues; it reads HIQSSTPGPAQNTR. Residues 2387–2398 are compositionally biased toward basic and acidic residues; the sequence is GMSDDKNPEPCV.

This sequence belongs to the herpesviridae large tegument protein family. In terms of assembly, interacts with host CUL1 and CUL4A; these interactions inhibit the E3 ligase activity of cullins. Interacts with inner tegument protein. Interacts with capsid vertex specific component CVC2. Interacts with the major capsid protein/MCP.

It localises to the virion tegument. The protein localises to the host cytoplasm. It is found in the host nucleus. It carries out the reaction Thiol-dependent hydrolysis of ester, thioester, amide, peptide and isopeptide bonds formed by the C-terminal Gly of ubiquitin (a 76-residue protein attached to proteins as an intracellular targeting signal).. Large tegument protein that plays multiple roles in the viral cycle. During viral entry, remains associated with the capsid while most of the tegument is detached and participates in the capsid transport toward the host nucleus. Plays a role in the routing of the capsid at the nuclear pore complex and subsequent uncoating. Within the host nucleus, acts as a deneddylase and promotes the degradation of nuclear CRLs (cullin-RING ubiquitin ligases) and thereby stabilizes nuclear CRL substrates, while cytoplasmic CRLs remain unaffected. These modifications prevent host cell cycle S-phase progression and create a favorable environment allowing efficient viral genome replication. Participates later in the secondary envelopment of capsids. Indeed, plays a linker role for the association of the outer viral tegument to the capsids together with the inner tegument protein. The protein is Large tegument protein deneddylase of Apodemus sylvaticus (European woodmouse).